The following is a 468-amino-acid chain: Factor XIIa inhibitor (468 aa).

An N-terminal signal peptide occupies residues 1-23 (MASRLTPLTLLLLLLLAGDRVTS). Residues 27–60 (VGPGNLQEGESEGDSQKGGILDGESIQGNEDSPT) form a disordered region. N-linked (GlcNAc...) asparagine glycans are attached at residues Asn65, Asn176, Asn227, and Asn326. 2 disulfides stabilise this stretch: Cys97–Cys396 and Cys104–Cys179.

It belongs to the serpin family. Post-translationally, N- and O-glycosylated.

The protein resides in the secreted. In terms of biological role, may play a potentially crucial role in regulating important physiological pathways including complement activation, blood coagulation, fibrinolysis and the generation of kinins. The polypeptide is Factor XIIa inhibitor (Bos taurus (Bovine)).